Consider the following 291-residue polypeptide: Formamidopyrimidine-DNA glycosylase (291 aa).

Catalysis depends on Pro2, which acts as the Schiff-base intermediate with DNA. Glu3 acts as the Proton donor in catalysis. The Proton donor; for beta-elimination activity role is filled by Lys58. His100, Arg123, and Lys166 together coordinate DNA. Residues 257-291 form an FPG-type zinc finger; it reads SVYGREGKECLHCGIPIVRILQSGRSSFYCSQCQK. The active-site Proton donor; for delta-elimination activity is the Arg281.

It belongs to the FPG family. In terms of assembly, monomer. The cofactor is Zn(2+).

The enzyme catalyses Hydrolysis of DNA containing ring-opened 7-methylguanine residues, releasing 2,6-diamino-4-hydroxy-5-(N-methyl)formamidopyrimidine.. It carries out the reaction 2'-deoxyribonucleotide-(2'-deoxyribose 5'-phosphate)-2'-deoxyribonucleotide-DNA = a 3'-end 2'-deoxyribonucleotide-(2,3-dehydro-2,3-deoxyribose 5'-phosphate)-DNA + a 5'-end 5'-phospho-2'-deoxyribonucleoside-DNA + H(+). Functionally, involved in base excision repair of DNA damaged by oxidation or by mutagenic agents. Acts as a DNA glycosylase that recognizes and removes damaged bases. Has a preference for oxidized purines, such as 7,8-dihydro-8-oxoguanine (8-oxoG). Has AP (apurinic/apyrimidinic) lyase activity and introduces nicks in the DNA strand. Cleaves the DNA backbone by beta-delta elimination to generate a single-strand break at the site of the removed base with both 3'- and 5'-phosphates. The chain is Formamidopyrimidine-DNA glycosylase from Bartonella henselae (strain ATCC 49882 / DSM 28221 / CCUG 30454 / Houston 1) (Rochalimaea henselae).